The primary structure comprises 396 residues: L-tyrosine/L-aspartate decarboxylase (396 aa).

K245 bears the N6-(pyridoxal phosphate)lysine mark.

It belongs to the group II decarboxylase family. MfnA subfamily. In terms of assembly, homodimer. Pyridoxal 5'-phosphate is required as a cofactor.

It carries out the reaction L-tyrosine + H(+) = tyramine + CO2. The catalysed reaction is L-aspartate + H(+) = beta-alanine + CO2. It participates in cofactor biosynthesis; methanofuran biosynthesis. Its pathway is cofactor biosynthesis; coenzyme A biosynthesis. Its activity is regulated as follows. Inhibited by hydroxylamine and O-methylhydroxylamine. In terms of biological role, catalyzes the decarboxylation of L-tyrosine to produce tyramine for methanofuran biosynthesis. Can also catalyze the decarboxylation of L-aspartate to produce beta-alanine for coenzyme A (CoA) biosynthesis. This Methanocaldococcus jannaschii (strain ATCC 43067 / DSM 2661 / JAL-1 / JCM 10045 / NBRC 100440) (Methanococcus jannaschii) protein is L-tyrosine/L-aspartate decarboxylase.